The primary structure comprises 241 residues: Ribonuclease PH (241 aa).

Phosphate contacts are provided by residues arginine 89 and 127 to 129 (GTR).

The protein belongs to the RNase PH family. Homohexameric ring arranged as a trimer of dimers.

It catalyses the reaction tRNA(n+1) + phosphate = tRNA(n) + a ribonucleoside 5'-diphosphate. Functionally, phosphorolytic 3'-5' exoribonuclease that plays an important role in tRNA 3'-end maturation. Removes nucleotide residues following the 3'-CCA terminus of tRNAs; can also add nucleotides to the ends of RNA molecules by using nucleoside diphosphates as substrates, but this may not be physiologically important. Probably plays a role in initiation of 16S rRNA degradation (leading to ribosome degradation) during starvation. This chain is Ribonuclease PH, found in Stenotrophomonas maltophilia (strain K279a).